The sequence spans 234 residues: Coiled-coil domain-containing protein 194 (234 aa).

The N-terminal stretch at 1 to 43 (MAEPGPEPGRAWRLLALCGAAVFLAAAAAGGALVAWNLAASTA) is a signal peptide. The tract at residues 44-63 (RSPRCPEPEQMNATVRPPDS) is disordered. Positions 67–171 (VEELRRRLAE…LQRAGAAEAA (105 aa)) form a coiled coil. A disordered region spans residues 194 to 234 (GTLRKESRLRPRSGSRTKPSISHRPKSGSTKGCRRPPRDPQ). Over residues 203-219 (RPRSGSRTKPSISHRPK) the composition is skewed to basic residues.

The polypeptide is Coiled-coil domain-containing protein 194 (Mus musculus (Mouse)).